We begin with the raw amino-acid sequence, 777 residues long: MSNLRIFAVNQKKISSLHYFNNMCSSKIRASLKRLKLHVLLGRNYSSLPGLIGNDIKSLHSIINPPIAKIRNIGIMAHIDAGKTTTTERILYYSGYTRSLGDVDDGDTVTDFMAQERERGITIQSAAVTFDWKGYRINLIDTPGHVDFTLEVERCLRVLDGAVAVFDASAGVEAQTLTVWRQADKHKVPRICFLNKMDKIGASFNYAVESIREKLKAKPLLLQLPIGEGKAFKGVVDVVRTEKLLWNPNSDDGKDFERKPLLEMSDPKLLKETTEARNALIEQVADLDDEFADLVLGEFSENFDLLPAEKLQTAIHRVTLAQTAVPVLCGSALKNKGVQPLLDAITMYLPSPEERNYEFLQWYKGDLCALAFKVLHDKQRGPLVFMRIYSGMLKPQTAIHNINGNCTERVSRLLLPFADQHIEIPLLTAGNIALTVGLKHTATGDTIVSSRSSALAASRRAKREGEKKQKENNEAERLLLAGVEIPEPVFFCTIEPPSMAKQPDLDHALKCLQREDPSLKVKLDPDSGQTVLCGMGELHIEIIHDRIKREYGLETYLGPLQVAYREAILNSIRATDTLDRTLGDKRHLVTVELEAKPVETSSLLPVIEYAASVAGDLSQASREAFENGVHSACLQGPLLGSPVQDVAVTLHSLVIHPGTSTTMISACVSRCLQKALKKADKQILEPLMNLEVTVSREYLSPVLADLAQRRGNIQEIQSRQDNKVVIGYVPLAEIMGYSTVLRTLTSGSATFALELSNYQAMNPQDQSTLLSQRHGLS.

Residues 68–353 form the tr-type G domain; it reads AKIRNIGIMA…AITMYLPSPE (286 aa). Residues 77 to 84, 141 to 145, and 195 to 198 each bind GTP; these read AHIDAGKT, DTPGH, and NKMD.

It belongs to the TRAFAC class translation factor GTPase superfamily. Classic translation factor GTPase family. EF-G/EF-2 subfamily.

The protein localises to the mitochondrion. It catalyses the reaction GTP + H2O = GDP + phosphate + H(+). Functionally, mitochondrial GTPase that mediates the disassembly of ribosomes from messenger RNA at the termination of mitochondrial protein biosynthesis. Acts in collaboration with MRRF. GTP hydrolysis follows the ribosome disassembly and probably occurs on the ribosome large subunit. Not involved in the GTP-dependent ribosomal translocation step during translation elongation. The polypeptide is Ribosome-releasing factor 2, mitochondrial (Bos taurus (Bovine)).